A 43-amino-acid chain; its full sequence is Large ribosomal subunit protein uL5 (43 aa).

The protein belongs to the universal ribosomal protein uL5 family. As to quaternary structure, part of the 50S ribosomal subunit; part of the 5S rRNA/L5/L18/L25 subcomplex. Contacts the 5S rRNA and the P site tRNA. Forms a bridge to the 30S subunit in the 70S ribosome.

In terms of biological role, this is one of the proteins that bind and probably mediate the attachment of the 5S RNA into the large ribosomal subunit, where it forms part of the central protuberance. In the 70S ribosome it contacts protein S13 of the 30S subunit (bridge B1b), connecting the 2 subunits; this bridge is implicated in subunit movement. Contacts the P site tRNA; the 5S rRNA and some of its associated proteins might help stabilize positioning of ribosome-bound tRNAs. The chain is Large ribosomal subunit protein uL5 (rplE) from Serratia marcescens.